The primary structure comprises 251 residues: CDP-diacylglycerol pyrophosphatase (251 aa).

The chain crosses the membrane as a helical span at residues 4 to 24 (AGLLFLVMIVIAVVAAGIGYW).

This sequence belongs to the Cdh family.

It localises to the cell inner membrane. It carries out the reaction a CDP-1,2-diacyl-sn-glycerol + H2O = a 1,2-diacyl-sn-glycero-3-phosphate + CMP + 2 H(+). The protein operates within phospholipid metabolism; CDP-diacylglycerol degradation; phosphatidate from CDP-diacylglycerol: step 1/1. The sequence is that of CDP-diacylglycerol pyrophosphatase from Escherichia coli O127:H6 (strain E2348/69 / EPEC).